The sequence spans 689 residues: Elongation factor G (689 aa).

One can recognise a tr-type G domain in the interval 8–282 (ERTRNIGIMA…GVVAYMPSPL (275 aa)). GTP is bound by residues 17 to 24 (AHIDAGKT), 81 to 85 (DTPGH), and 135 to 138 (NKMD).

Belongs to the TRAFAC class translation factor GTPase superfamily. Classic translation factor GTPase family. EF-G/EF-2 subfamily.

The protein localises to the cytoplasm. Its function is as follows. Catalyzes the GTP-dependent ribosomal translocation step during translation elongation. During this step, the ribosome changes from the pre-translocational (PRE) to the post-translocational (POST) state as the newly formed A-site-bound peptidyl-tRNA and P-site-bound deacylated tRNA move to the P and E sites, respectively. Catalyzes the coordinated movement of the two tRNA molecules, the mRNA and conformational changes in the ribosome. The protein is Elongation factor G of Alkaliphilus metalliredigens (strain QYMF).